Here is an 81-residue protein sequence, read N- to C-terminus: Photosystem I iron-sulfur center (81 aa).

4Fe-4S ferredoxin-type domains lie at 2–31 (SHSV…MIPW) and 39–68 (IAPA…VRVY). [4Fe-4S] cluster contacts are provided by C11, C14, C17, C21, C48, C51, C54, and C58.

In terms of assembly, the eukaryotic PSI reaction center is composed of at least 11 subunits. The cofactor is [4Fe-4S] cluster.

It localises to the plastid. Its subcellular location is the chloroplast thylakoid membrane. The catalysed reaction is reduced [plastocyanin] + hnu + oxidized [2Fe-2S]-[ferredoxin] = oxidized [plastocyanin] + reduced [2Fe-2S]-[ferredoxin]. Functionally, apoprotein for the two 4Fe-4S centers FA and FB of photosystem I (PSI); essential for photochemical activity. FB is the terminal electron acceptor of PSI, donating electrons to ferredoxin. The C-terminus interacts with PsaA/B/D and helps assemble the protein into the PSI complex. Required for binding of PsaD and PsaE to PSI. PSI is a plastocyanin-ferredoxin oxidoreductase, converting photonic excitation into a charge separation, which transfers an electron from the donor P700 chlorophyll pair to the spectroscopically characterized acceptors A0, A1, FX, FA and FB in turn. This is Photosystem I iron-sulfur center from Drimys granadensis.